The following is an 848-amino-acid chain: Trimethylamine-N-oxide reductase 1 (848 aa).

The tat-type signal signal peptide spans 1–39 (MNNNDLFQASRRRFLAQLGGLTVAGMLGPSLLTPRRATA). Ser-191 provides a ligand contact to Mo-bis(molybdopterin guanine dinucleotide).

The protein belongs to the prokaryotic molybdopterin-containing oxidoreductase family. In terms of assembly, interacts with the N-terminal domain of TorC. Mo-bis(molybdopterin guanine dinucleotide) is required as a cofactor. Post-translationally, exported by the Tat system. The position of the signal peptide cleavage has been experimentally proven.

It is found in the periplasm. The enzyme catalyses trimethylamine + 2 Fe(III)-[cytochrome c] + H2O = trimethylamine N-oxide + 2 Fe(II)-[cytochrome c] + 3 H(+). In terms of biological role, reduces trimethylamine-N-oxide (TMAO) into trimethylamine; an anaerobic reaction coupled to energy-yielding reactions. In Escherichia coli (strain K12), this protein is Trimethylamine-N-oxide reductase 1 (torA).